The following is a 510-amino-acid chain: Glutamate decarboxylase (510 aa).

Position 107 to 109 (107 to 109 (QLS)) interacts with substrate. An N6-(pyridoxal phosphate)lysine modification is found at Lys322. Arg483 serves as a coordination point for substrate.

Belongs to the group II decarboxylase family. In terms of assembly, homodimer. Pyridoxal 5'-phosphate serves as cofactor. Expressed in the head (at protein level).

The enzyme catalyses L-glutamate + H(+) = 4-aminobutanoate + CO2. Functionally, catalyzes the production of GABA. The sequence is that of Glutamate decarboxylase (Gad1) from Drosophila melanogaster (Fruit fly).